The chain runs to 263 residues: Aminoglycoside 3'-phosphotransferase (263 aa).

The Proton acceptor role is filled by aspartate 189.

This sequence belongs to the aminoglycoside phosphotransferase family.

The catalysed reaction is kanamycin A + ATP = kanamycin 3'-phosphate + ADP + H(+). Resistance to kanamycin and structurally-related aminoglycosides, including amikacin. The polypeptide is Aminoglycoside 3'-phosphotransferase (aphA) (Staphylococcus aureus).